Consider the following 620-residue polypeptide: bZIP transcription factor 49 (620 aa).

The Cytoplasmic segment spans residues 1–287; that stretch reads MAEPVLEDTY…VAKVKKFKKV (287 aa). Residues 109–135 show a composition bias toward polar residues; the sequence is SSCYNRESPTDSDFSGTSQSLSFSGQD. Residues 109–155 are disordered; sequence SSCYNRESPTDSDFSGTSQSLSFSGQDSAKRKTEIEEDSSDESRRLG. One can recognise a bZIP domain in the interval 172-235; that stretch reads EKKKNVRLVR…VTLRQQMGTR (64 aa). Positions 173–205 are basic motif; that stretch reads KKKNVRLVRNRESAHLSRQRKKHYVEELEDKVK. The interval 211 to 218 is leucine-zipper; it reads ISELSSKM. A helical transmembrane segment spans residues 288–308; sequence ASFSVFGFLFCMFLFGALVNI. Topologically, residues 309–620 are lumenal; sequence SYGEYKSNYV…RPDVPHLMTS (312 aa). Disordered regions lie at residues 343-364, 398-460, and 505-557; these read DSDQ…PRNS, ARDS…SNDQ, and PASP…RETK. N-linked (GlcNAc...) asparagine glycans are attached at residues asparagine 351 and asparagine 363. Positions 352–364 are enriched in polar residues; sequence VSETENLGPPRNS. Composition is skewed to basic and acidic residues over residues 398 to 409 and 432 to 441; these read ARDSETKNEEGK and RTRDVSKHLY. Polar residues-rich tracts occupy residues 447-460 and 508-519; these read GLSS…SNDQ and PHTQQCKNTSDT. Residue asparagine 515 is glycosylated (N-linked (GlcNAc...) asparagine). Positions 526 to 529 match the RRIL cleavage motif motif; it reads RRIL. Asparagine 539 and asparagine 546 each carry an N-linked (GlcNAc...) asparagine glycan. Basic and acidic residues predominate over residues 540–557; it reads LTKEDHNSSSKDKFRETK.

Belongs to the bZIP family. In terms of assembly, interacts with BZIP28.

Its subcellular location is the endoplasmic reticulum membrane. The protein localises to the nucleus. In terms of biological role, transcriptional activator involved in stress responses. The protein is bZIP transcription factor 49 of Arabidopsis thaliana (Mouse-ear cress).